The primary structure comprises 150 residues: D-aminoacyl-tRNA deacylase (150 aa).

The Gly-cisPro motif, important for rejection of L-amino acids motif lies at 137-138 (GP).

It belongs to the DTD family. As to quaternary structure, homodimer.

The protein localises to the cytoplasm. It catalyses the reaction glycyl-tRNA(Ala) + H2O = tRNA(Ala) + glycine + H(+). It carries out the reaction a D-aminoacyl-tRNA + H2O = a tRNA + a D-alpha-amino acid + H(+). Its function is as follows. An aminoacyl-tRNA editing enzyme that deacylates mischarged D-aminoacyl-tRNAs. Also deacylates mischarged glycyl-tRNA(Ala), protecting cells against glycine mischarging by AlaRS. Acts via tRNA-based rather than protein-based catalysis; rejects L-amino acids rather than detecting D-amino acids in the active site. By recycling D-aminoacyl-tRNA to D-amino acids and free tRNA molecules, this enzyme counteracts the toxicity associated with the formation of D-aminoacyl-tRNA entities in vivo and helps enforce protein L-homochirality. This Listeria innocua serovar 6a (strain ATCC BAA-680 / CLIP 11262) protein is D-aminoacyl-tRNA deacylase.